A 693-amino-acid polypeptide reads, in one-letter code: Glycine--tRNA ligase beta subunit (693 aa).

It belongs to the class-II aminoacyl-tRNA synthetase family. As to quaternary structure, tetramer of two alpha and two beta subunits.

Its subcellular location is the cytoplasm. It catalyses the reaction tRNA(Gly) + glycine + ATP = glycyl-tRNA(Gly) + AMP + diphosphate. The polypeptide is Glycine--tRNA ligase beta subunit (Vibrio vulnificus (strain CMCP6)).